The sequence spans 231 residues: Chalcone--flavanone isomerase (231 aa).

3 residues coordinate substrate: Thr-46, Asn-112, and Ser-189.

It belongs to the chalcone isomerase family.

It carries out the reaction a chalcone = a flavanone.. It functions in the pathway secondary metabolite biosynthesis; flavonoid biosynthesis. Catalyzes the intramolecular cyclization of bicyclic chalcones into tricyclic (S)-flavanones. Responsible for the isomerization of 4,2',4',6'-tetrahydroxychalcone (also termed chalcone) into naringenin. This is Chalcone--flavanone isomerase (CHI) from Hordeum vulgare (Barley).